Reading from the N-terminus, the 147-residue chain is Transthyretin (147 aa).

The N-terminal stretch at 1 to 20 (MASLRLFLLCLAGLVFVSEA) is a signal peptide. Position 30 is a sulfocysteine (C30). K35 lines the L-thyroxine pocket. The residue at position 62 (E62) is a 4-carboxyglutamate. S72 carries the phosphoserine modification. E74 lines the L-thyroxine pocket. An N-linked (GlcNAc...) asparagine glycan is attached at N118. L-thyroxine is bound at residue S137.

This sequence belongs to the transthyretin family. As to quaternary structure, homotetramer. Dimer of dimers. In the homotetramer, subunits assemble around a central channel that can accommodate two ligand molecules. Interacts with RBP4. Sulfonation of the reactive cysteine Cys-30 enhances the stability of the native conformation of TTR, avoiding misassembly of the protein leading to amyloid formation. As to expression, detected in plasma (at protein level). Detected in liver.

The protein localises to the secreted. Thyroid hormone-binding protein. Probably transports thyroxine from the bloodstream to the brain. This is Transthyretin (Ttr) from Mus musculus (Mouse).